A 686-amino-acid polypeptide reads, in one-letter code: DNA ligase (686 aa).

NAD(+) is bound by residues 45–49, 94–95, and E127; these read DNEYD and SL. The N6-AMP-lysine intermediate role is filled by K129. NAD(+) is bound by residues R150, E187, K302, and K326. Zn(2+) is bound by residues C420, C423, C438, and C444. Residues 605–686 form the BRCT domain; it reads LDNLPLEGQT…DEFLKMIGAS (82 aa).

It belongs to the NAD-dependent DNA ligase family. LigA subfamily. Mg(2+) serves as cofactor. Requires Mn(2+) as cofactor.

It carries out the reaction NAD(+) + (deoxyribonucleotide)n-3'-hydroxyl + 5'-phospho-(deoxyribonucleotide)m = (deoxyribonucleotide)n+m + AMP + beta-nicotinamide D-nucleotide.. In terms of biological role, DNA ligase that catalyzes the formation of phosphodiester linkages between 5'-phosphoryl and 3'-hydroxyl groups in double-stranded DNA using NAD as a coenzyme and as the energy source for the reaction. It is essential for DNA replication and repair of damaged DNA. In Psychrobacter sp. (strain PRwf-1), this protein is DNA ligase.